A 176-amino-acid chain; its full sequence is Trypsin inhibitor 1B (176 aa).

2 disulfide bridges follow: C39–C83 and C132–C143.

Belongs to the protease inhibitor I3 (leguminous Kunitz-type inhibitor) family.

Inhibits trypsin stoichiometrically. The protein is Trypsin inhibitor 1B of Erythrina variegata (Indian coral tree).